The following is a 413-amino-acid chain: Cis,cis-muconate transport protein (413 aa).

At 1-16 (MYSNNQRSRIGSHTWK) the chain is on the cytoplasmic side. A helical membrane pass occupies residues 17–37 (IAFLFAFLALLVDGADLMLLS). At 38 to 53 (YSLNSIKAEFNLSTVE) the chain is on the periplasmic side. A helical membrane pass occupies residues 54-74 (AGMLGSFTLAGMAIGGIFGGW). Over 75-85 (ACDRFGRVRIV) the chain is Cytoplasmic. A helical membrane pass occupies residues 86-106 (VISILTFSILTCGLGLTQSFI). Residues 107–112 (QFGVLR) are Periplasmic-facing. A helical membrane pass occupies residues 113-133 (FFASLGLGSLYIACNTLMAEY). Over 134–145 (VPTKYRTTVLGT) the chain is Cytoplasmic. The helical transmembrane segment at 146–166 (LQAGWTVGYIVATLLAGWLIP) threads the bilayer. The Periplasmic segment spans residues 167–171 (DHGWR). Residues 172 to 192 (VLFYVAIIPVLMAVLMHFFVP) form a helical membrane-spanning segment. Topologically, residues 193 to 228 (EPAAWQQSRLAPSKQTETVKTSAFKLIFQDKRNRNM) are cytoplasmic. Residues 229-249 (FILWALTAGFLQFGYYGVNNW) form a helical membrane-spanning segment. The Periplasmic portion of the chain corresponds to 250–266 (MPSYLESELGMKFKEMT). The chain crosses the membrane as a helical span at residues 267-287 (AYMVGTYTAMILGKILAGFMA). Topologically, residues 288–293 (DKLGRR) are cytoplasmic. Residues 294-314 (FTYAFGAIGTAIFLPLIVFYN) traverse the membrane as a helical segment. Over 315–318 (SPDN) the chain is Periplasmic. The helical transmembrane segment at 319–339 (ILYLLVIFGFLYGIPYGVNAT) threads the bilayer. Over 340-352 (YMTESFPTAIRGT) the chain is Cytoplasmic. The helical transmembrane segment at 353 to 376 (AIGGAYNVGRLGAAIAPATIGFLA) threads the bilayer. Residues 377 to 382 (SGGSIG) lie on the Periplasmic side of the membrane. The chain crosses the membrane as a helical span at residues 383–403 (LGFVVMGAAYFICGVIPALFI). Over 404-413 (KEKQYDPQQS) the chain is Cytoplasmic.

It belongs to the major facilitator superfamily. Aromatic acid:H(+) symporter (AAHS) (TC 2.A.1.15) family.

It localises to the cell inner membrane. Functionally, probable uptake of muconate. The chain is Cis,cis-muconate transport protein (mucK) from Acinetobacter baylyi (strain ATCC 33305 / BD413 / ADP1).